We begin with the raw amino-acid sequence, 744 residues long: Protein zyg-11 homolog B (744 aa).

3 LRR repeats span residues 185–208 (LPRL…LACK), 216–236 (MHHL…VREL), and 237–261 (KHLN…LLEQ).

It belongs to the zyg-11 family. As to quaternary structure, interacts with ELOC/Elongin C. Part of an E3 ubiquitin ligase complex including ZYG11B, CUL2 and Elongin BC.

Its function is as follows. Serves as substrate adapter subunit in the E3 ubiquitin ligase complex ZYG11B-CUL2-Elongin BC. Acts redudantly with ZER1 to target substrates bearing N-terminal glycine degrons for proteasomal degradation. Involved in the clearance of proteolytic fragments generated by caspase cleavage during apoptosis since N-terminal glycine degrons are strongly enriched at caspase cleavage sites. Also important in the quality control of protein N-myristoylation in which N-terminal glycine degrons are conditionally exposed after a failure of N-myristoylation. This is Protein zyg-11 homolog B from Mus musculus (Mouse).